The chain runs to 207 residues: Small ribosomal subunit protein uS2 (207 aa).

The protein belongs to the universal ribosomal protein uS2 family.

This is Small ribosomal subunit protein uS2 from Pyrobaculum islandicum (strain DSM 4184 / JCM 9189 / GEO3).